The primary structure comprises 64 residues: Large ribosomal subunit protein bL35 (64 aa).

Residues 1 to 29 (MPKMKTHSGAKKRFKLTGSGKLRRQQANR) form a disordered region.

Belongs to the bacterial ribosomal protein bL35 family.

This is Large ribosomal subunit protein bL35 from Pseudarthrobacter chlorophenolicus (strain ATCC 700700 / DSM 12829 / CIP 107037 / JCM 12360 / KCTC 9906 / NCIMB 13794 / A6) (Arthrobacter chlorophenolicus).